A 514-amino-acid polypeptide reads, in one-letter code: Flagellin B (514 aa).

The protein belongs to the bacterial flagellin family. In terms of assembly, heteromer of FlaA and FlaB. FlaB is located proximal to the hook while the remainder of the filament is composed of the predominant FlaA.

It is found in the secreted. It localises to the bacterial flagellum. Flagellin is the subunit protein which polymerizes to form the filaments of bacterial flagella. Important for motility and virulence. This is Flagellin B (flaB) from Helicobacter pylori (strain ATCC 700392 / 26695) (Campylobacter pylori).